A 243-amino-acid chain; its full sequence is Probable transcriptional regulatory protein BAV2207 (243 aa).

A disordered region spans residues 1–21; that stretch reads MAGHSKWANIQHRKGRQDAKR.

It belongs to the TACO1 family.

It is found in the cytoplasm. This is Probable transcriptional regulatory protein BAV2207 from Bordetella avium (strain 197N).